A 274-amino-acid chain; its full sequence is 2,3,4,5-tetrahydropyridine-2,6-dicarboxylate N-succinyltransferase (274 aa).

Residues R104 and D141 each coordinate substrate.

This sequence belongs to the transferase hexapeptide repeat family. Homotrimer.

The protein resides in the cytoplasm. The catalysed reaction is (S)-2,3,4,5-tetrahydrodipicolinate + succinyl-CoA + H2O = (S)-2-succinylamino-6-oxoheptanedioate + CoA. The protein operates within amino-acid biosynthesis; L-lysine biosynthesis via DAP pathway; LL-2,6-diaminopimelate from (S)-tetrahydrodipicolinate (succinylase route): step 1/3. This is 2,3,4,5-tetrahydropyridine-2,6-dicarboxylate N-succinyltransferase from Shewanella sediminis (strain HAW-EB3).